Here is a 750-residue protein sequence, read N- to C-terminus: 5-methyltetrahydropteroyltriglutamate--homocysteine methyltransferase (750 aa).

5-methyltetrahydropteroyltri-L-glutamate contacts are provided by residues R15–K18 and K114. L-homocysteine contacts are provided by residues I425–S427 and E478. Residues I425 to S427 and E478 contribute to the L-methionine site. Residue W555 participates in 5-methyltetrahydropteroyltri-L-glutamate binding. D593 provides a ligand contact to L-homocysteine. D593 lines the L-methionine pocket. Residue E599 participates in 5-methyltetrahydropteroyltri-L-glutamate binding. Residues H636, C638, and E660 each coordinate Zn(2+). H689 (proton donor) is an active-site residue. C721 serves as a coordination point for Zn(2+).

It belongs to the vitamin-B12 independent methionine synthase family. The cofactor is Zn(2+).

The catalysed reaction is 5-methyltetrahydropteroyltri-L-glutamate + L-homocysteine = tetrahydropteroyltri-L-glutamate + L-methionine. It participates in amino-acid biosynthesis; L-methionine biosynthesis via de novo pathway; L-methionine from L-homocysteine (MetE route): step 1/1. Functionally, catalyzes the transfer of a methyl group from 5-methyltetrahydrofolate to homocysteine resulting in methionine formation. In Streptococcus sanguinis (strain SK36), this protein is 5-methyltetrahydropteroyltriglutamate--homocysteine methyltransferase.